Here is a 1220-residue protein sequence, read N- to C-terminus: Protein patched homolog 1 (1220 aa).

The interval 1 to 27 is disordered; that stretch reads MASDPRDPGPAGGVFGDLPPSYTRSPP. Residues 1-84 lie on the Cytoplasmic side of the membrane; it reads MASDPRDPGP…GCHIQRHCGK (84 aa). The helical transmembrane segment at 85–105 threads the bilayer; the sequence is VLFIGLLVFGALSVGLRVAAI. The Extracellular segment spans residues 106-419; the sequence is ETDIEKLWVE…LNDIMKSFSD (314 aa). Asn-397 carries an N-linked (GlcNAc...) asparagine glycan. The chain crosses the membrane as a helical span at residues 420–440; that stretch reads VSVIRVAGGYLLMLAYACVTM. Residues 421–579 enclose the SSD domain; the sequence is SVIRVAGGYL…LLIFPAILSL (159 aa). At 441–449 the chain is on the cytoplasmic side; it reads LRWDCAKSQ. Residues 450-470 form a helical membrane-spanning segment; the sequence is GAVGLAGVLLVALSVAAGLGL. The Extracellular segment spans residues 471 to 484; it reads CSLLGLSFNAATTQ. The helical transmembrane segment at 485–505 threads the bilayer; it reads VLPSLALGIGVDDMFLLGHSF. Residues 506-528 are Cytoplasmic-facing; it reads TETRSNIPFKERTGDCLRRTGTS. Residues 529-549 traverse the membrane as a helical segment; sequence VALTSVNNMIAFFMAALVPIP. Residues 550–558 lie on the Extracellular side of the membrane; sequence ALRAFSLQA. Residues 559-579 traverse the membrane as a helical segment; it reads AVVVVFNFAMALLIFPAILSL. Residues 580–739 are Cytoplasmic-facing; sequence DLHRREDKRL…APLLLKPETK (160 aa). Residues 740-760 traverse the membrane as a helical segment; sequence TVVVVVFVALLSLSLYGTTMV. The Extracellular segment spans residues 761 to 1016; the sequence is HDGLYLTDIV…WEQYIGLRHW (256 aa). Asn-865 and Asn-888 each carry an N-linked (GlcNAc...) asparagine glycan. Residues 1017-1037 form a helical membrane-spanning segment; the sequence is FLLSISVVLACTFLVCAILLL. Over 1038 to 1044 the chain is Cytoplasmic; the sequence is NPWTAGV. Residues 1045 to 1065 form a helical membrane-spanning segment; the sequence is IVFILPMMTVELFGIMGLIGI. Residues 1066–1072 lie on the Extracellular side of the membrane; that stretch reads KLSAIPV. Residues 1073–1093 traverse the membrane as a helical segment; it reads VILIASVGIGVEFTVHIALGF. The Cytoplasmic portion of the chain corresponds to 1094-1110; sequence LTAIGDRNTRSAVAMEH. A helical transmembrane segment spans residues 1111–1131; sequence MFAPVIDGAISTLLGVLMLAG. At 1132–1143 the chain is on the extracellular side; the sequence is SEFDFIMRYFFA. Residues 1144–1164 form a helical membrane-spanning segment; the sequence is VLAILTLLGILNGLVLLPVLL. Topologically, residues 1165–1220 are cytoplasmic; sequence SLMGPPAEVVPANNANHLQSPSPEPMPPPMNHHGYYAGHIPKASHQAFSETSDSEY.

Belongs to the patched family. Post-translationally, glycosylation is necessary for SHH binding. As to expression, detected in embryonic presomitic mesoderm, neuroectoderm, tissue surrounding the notochord, ventral neural tube.

It localises to the membrane. Its function is as follows. Acts as a receptor for sonic hedgehog (SHH), indian hedgehog (IHH) and desert hedgehog (DHH). Associates with the smoothened protein (SMO) to transduce the hedgehog's proteins signal. The protein is Protein patched homolog 1 (ptch1) of Danio rerio (Zebrafish).